A 308-amino-acid chain; its full sequence is Porphobilinogen deaminase (308 aa).

Position 241 is an S-(dipyrrolylmethanemethyl)cysteine (Cys-241).

The protein belongs to the HMBS family. As to quaternary structure, monomer. Requires dipyrromethane as cofactor.

It carries out the reaction 4 porphobilinogen + H2O = hydroxymethylbilane + 4 NH4(+). The protein operates within porphyrin-containing compound metabolism; protoporphyrin-IX biosynthesis; coproporphyrinogen-III from 5-aminolevulinate: step 2/4. Functionally, tetrapolymerization of the monopyrrole PBG into the hydroxymethylbilane pre-uroporphyrinogen in several discrete steps. The protein is Porphobilinogen deaminase of Staphylococcus aureus (strain Mu50 / ATCC 700699).